The primary structure comprises 780 residues: Dynamin-related protein 3B (780 aa).

An N-acetylserine modification is found at serine 2. In terms of domain architecture, Dynamin-type G spans 40-315 (TIALPQVAVV…LVQHIKALLP (276 aa)). Positions 50–57 (GSQSSGKS) are G1 motif. 50–57 (GSQSSGKS) serves as a coordination point for GTP. The G2 motif stretch occupies residues 76–78 (CTR). Residues 157 to 160 (DLPG) form a G3 motif region. GTP contacts are provided by residues 157–161 (DLPGI) and 226–229 (TKLD). The tract at residues 226–229 (TKLD) is G4 motif. Residues 256–259 (VNRS) form a G5 motif region. 2 disordered regions span residues 536–558 (PVAR…QIKT) and 573–592 (QAVP…STSW). Residues 539 to 548 (RPRDTVEPER) show a composition bias toward basic and acidic residues. The span at 549–558 (TASSGSQIKT) shows a compositional bias: polar residues. One can recognise a GED domain in the interval 654-745 (IEITKLLLKS…TLDELPLEAE (92 aa)). A compositionally biased stretch (basic and acidic residues) spans 753–770 (IGSEAKHEELPGTRRSRT). Positions 753–780 (IGSEAKHEELPGTRRSRTETNGNGRLHM) are disordered. The segment covering 771–780 (ETNGNGRLHM) has biased composition (polar residues).

Belongs to the TRAFAC class dynamin-like GTPase superfamily. Dynamin/Fzo/YdjA family. In terms of assembly, interacts with ARC5 on peroxisomes and ELM1 on mitochondria.

Its subcellular location is the mitochondrion. The protein resides in the peroxisome. Functionally, involved in the control of mitochondrial and peroxisomal division and morphology. The chain is Dynamin-related protein 3B (DRP3B) from Arabidopsis thaliana (Mouse-ear cress).